We begin with the raw amino-acid sequence, 1777 residues long: Fatty acid synthase subunit alpha (1777 aa).

A disordered region spans residues 101–124; the sequence is APVESADNEPAQPAASSTPAAPAP. Residues 110 to 120 are compositionally biased toward low complexity; it reads PAQPAASSTPA. Residues 151–237 enclose the Carrier domain; the sequence is LSAIDVVISI…KVMGGHIDRL (87 aa). Residue Ser-186 is modified to O-(pantetheine 4'-phosphoryl)serine. The ketoreductase (KR) domain stretch occupies residues 563-803; that stretch reads FTGRRVLVTG…ILSLLSGDIL (241 aa). The region spanning 1007 to 1539 is the Ketosynthase family 3 (KS3) domain; it reads KEIMHEVVID…QKGGLVVGIA (533 aa). Residues Cys-1193, His-1424, and His-1465 each act as for beta-ketoacyl synthase activity in the active site. Position 1661 (Asp-1661) interacts with Mg(2+). Residues 1661 to 1663, 1706 to 1716, 1730 to 1734, and 1760 to 1762 each bind acetyl-CoA; these read DIE, EAIFKSLQIPS, SNGAQ, and ITH.

This sequence belongs to the thiolase-like superfamily. Fungal fatty acid synthetase subunit alpha family. In terms of assembly, fatty acid synthase is composed of alpha and beta subunits.

The enzyme catalyses acetyl-CoA + n malonyl-CoA + 2n NADPH + 4n H(+) = a long-chain-acyl-CoA + n CoA + n CO2 + 2n NADP(+).. The catalysed reaction is a fatty acyl-[ACP] + malonyl-[ACP] + H(+) = a 3-oxoacyl-[ACP] + holo-[ACP] + CO2. It carries out the reaction a (3R)-hydroxyacyl-[ACP] + NADP(+) = a 3-oxoacyl-[ACP] + NADPH + H(+). It participates in secondary metabolite biosynthesis. Fatty acid synthase alpha subunit; part of the gene cluster that mediates the biosynthesis of oryzines, natural products with an unusual maleidride backbone. The two subunits of the fungal fatty acid synthase oryfasA and oryfasB probably form octenoic acid. This fatty acid is most likely activated by the acyl-CoA ligase oryP to give octenyl-CoA before the citrate synthase-like protein oryE catalyzes condensation with oxaloacetate to form tricarboxylic acid. The next steps of the pathways are conjectural, but a favorite possible route has been proposed, beginning with decarboxylation and concomitant dehydration by the decarboxylase oryM, followed by tautomerization, which may lead to the production of a diene intermediate. Reduction of this diene intermediate could give the known metabolite piliformic acid. On the pathway to oryzine B and oryzine A, however, hydroxylation of the diene by the alpha-ketoglutarate-dependent dioxygenase oryG and lactonisation by the lactonohydrolases oryH or oryL could give oryzine B directly. Finally, enoyl reduction by the dehydrogenase oryD would then convert oryzine B into oryzine A. This is Fatty acid synthase subunit alpha from Aspergillus oryzae (strain ATCC 42149 / RIB 40) (Yellow koji mold).